Here is a 268-residue protein sequence, read N- to C-terminus: Zwei Ig domain protein zig-8 (268 aa).

The first 21 residues, 1–21 (MRRFSNICVILFSFLYATGHG), serve as a signal peptide directing secretion. 2 consecutive Ig-like C2-type domains span residues 40-128 (PSQT…NTVY) and 140-251 (PSPS…NSAT). Cysteines 57 and 118 form a disulfide. N-linked (GlcNAc...) asparagine glycosylation is found at Asn82, Asn155, Asn164, and Asn191. Cys165 and Cys226 are oxidised to a cystine.

As to expression, expressed in PVT neurons and pharyngeal muscles.

It is found in the secreted. Together with zig-5, required postembryonically to maintain the position of ASI and ASH head neuron cell bodies and ventral nerve cord axons of PVQ, PVP and HSN neurons by preventing their displacement that could occur during body growth and movement. May act by reducing L1CAM-like protein sax-7 (long isoform) adhesion. The protein is Zwei Ig domain protein zig-8 of Caenorhabditis elegans.